Here is a 246-residue protein sequence, read N- to C-terminus: Dof zinc finger protein DOF4.7 (246 aa).

Polar residues-rich tracts occupy residues 1-12 (MMTSSHQSNTTG) and 27-37 (QINNKEPSPAT). The segment at 1–39 (MMTSSHQSNTTGFKPRRIKTTAKPPRQINNKEPSPATQP) is disordered. The Dof-type zinc-finger motif lies at 41–95 (LKCPRCDSVNTKFCYYNNYSLSQPRHYCKNCRRYWTRGGALRNVPIGGSTRNKNK). Cys-43, Cys-46, Cys-68, and Cys-71 together coordinate Zn(2+). The disordered stretch occupies residues 216–235 (GGATSGNHEDNDDGEGNLGN).

Interacts with ZFP2. In terms of tissue distribution, highly expressed at the base of all organs of the flower, especially in the abscission zone (AZ) of petals, stamens and sepals. Expressed at low levels in sepals, filaments, stigmatic papillae, tips of young siliques, and at the base of pedicels and leaf trichomes.

The protein localises to the nucleus. Transcription factor that binds specifically to a 5'-AA[AG]G-3' consensus core sequence. Involved in the negative regulation of floral organ abscission by binding to the typical DOF 5'-AAAG-3' sequences in the promoter of ADPG2/PGAZAT, and by down-regulating its expression. ADPG2/PGAZAT is an abscission-related and cell wall hydrolyzing polygalacturonase. May act through the interaction with ZFP2, an abscission-related transcription factor. The chain is Dof zinc finger protein DOF4.7 from Arabidopsis thaliana (Mouse-ear cress).